The sequence spans 591 residues: MASLKLGSKSEVFHLSGHTWLCKTGLKPDVMIQVVDESFHLHKFPLLSRSGYLETLFSKASETTCVAQLHDIPGGPETFLLVAKFCYGVRIEVTPENAVSLRCAAEYLQMSENYGDANLIYLTESFLNDHVFVNWEDSIKALEKSCEPKVLPLAEELHIVSRCIGSLAMKACAEDNTSFFNWPISLPEGTTTTTIYWNGIQTKATSENWWFNDVSSFLDLPMYKRFIKTVESRGVNAGIIAASVTHYAKRNLPLLGCSRKSGSPSEEGTNYGDDMYYSHEEQRSLLEEIVELLPGKKCVTSTKFLLRLLRTSMVLHASQVTQETLEKRIGMQLDEAALEDLLIPNMKYSGETLYDTDSVQRILDHFMLTFDSSIVEEKQMMGDSHPLKSITKVASLIDGYLAEVASDENLKLSKFQALGALIPEDVRPMDDGIYRAIDIYIKAHPWLTESEREQLCLLMNCQKLSLEACTHAAQNERLPLRVIVQVLFFEQMRLRTSIAGWLFGSEENNDTSGALEGNKNTNANMVMHGMRERVFELEKECMSMKQDLDKLVKTKEGRNFFSKIFGSRSKTKTSPCGKGGEDALVIPETKN.

The region spanning 28 to 95 is the BTB domain; sequence PDVMIQVVDE…CYGVRIEVTP (68 aa). The region spanning 208 to 493 is the NPH3 domain; it reads NWWFNDVSSF…VQVLFFEQMR (286 aa). Residue Y434 is modified to Phosphotyrosine.

Belongs to the NPH3 family.

It functions in the pathway protein modification; protein ubiquitination. Its function is as follows. May act as a substrate-specific adapter of an E3 ubiquitin-protein ligase complex (CUL3-RBX1-BTB) which mediates the ubiquitination and subsequent proteasomal degradation of target proteins. The protein is Putative BTB/POZ domain-containing protein At5g13600 of Arabidopsis thaliana (Mouse-ear cress).